A 428-amino-acid chain; its full sequence is Aspartate--tRNA(Asp) ligase (428 aa).

Residue glutamate 170 coordinates L-aspartate. The aspartate stretch occupies residues glutamine 192–lysine 195. Arginine 213 contacts L-aspartate. ATP contacts are provided by residues arginine 213–glutamate 215 and glutamate 351. Mg(2+) contacts are provided by glutamate 351 and serine 354. L-aspartate-binding residues include serine 354 and arginine 358. Glycine 399 to arginine 402 contacts ATP.

Belongs to the class-II aminoacyl-tRNA synthetase family. Type 2 subfamily. As to quaternary structure, homodimer. Mg(2+) is required as a cofactor.

The protein localises to the cytoplasm. The enzyme catalyses tRNA(Asp) + L-aspartate + ATP = L-aspartyl-tRNA(Asp) + AMP + diphosphate. In terms of biological role, catalyzes the attachment of L-aspartate to tRNA(Asp) in a two-step reaction: L-aspartate is first activated by ATP to form Asp-AMP and then transferred to the acceptor end of tRNA(Asp). The protein is Aspartate--tRNA(Asp) ligase of Pyrobaculum aerophilum (strain ATCC 51768 / DSM 7523 / JCM 9630 / CIP 104966 / NBRC 100827 / IM2).